Reading from the N-terminus, the 593-residue chain is Probable serine/threonine-protein kinase fhkA (593 aa).

Residues 1-24 (MSQTNYIPSTPNKSTPPSELSSTP) are disordered. The region spanning 54–111 (ITIGRSKTCNIVVPELIVSGKHCIITRADAIENGNTNYGLLMIQDQSTNGTFINGKLI) is the FHA domain. The Protein kinase domain maps to 180–472 (YDFIKELGSG…VEQALNHPWI (293 aa)). ATP is bound by residues 186–194 (LGSGNFSVV) and Lys-209. Asp-307 (proton acceptor) is an active-site residue.

It belongs to the protein kinase superfamily. CAMK Ser/Thr protein kinase family. CHK2 subfamily.

The catalysed reaction is L-seryl-[protein] + ATP = O-phospho-L-seryl-[protein] + ADP + H(+). It catalyses the reaction L-threonyl-[protein] + ATP = O-phospho-L-threonyl-[protein] + ADP + H(+). This is Probable serine/threonine-protein kinase fhkA (fhkA) from Dictyostelium discoideum (Social amoeba).